We begin with the raw amino-acid sequence, 214 residues long: Holliday junction branch migration complex subunit RuvA (214 aa).

A domain I region spans residues 1–64 (MITRIRGEML…EDAMTLYGFT (64 aa)). Residues 65–143 (SGEQLAVFEL…DITSKDAYQD (79 aa)) are domain II. Residues 144–160 (ISASEKLDNTGEKLGIS) are flexible linker. Residues 161–214 (TRHKHLDELKAALSSLGYTNREIEKTVDAIQGQITEGQDMEELLRLALQKLNTK) form a domain III region.

It belongs to the RuvA family. In terms of assembly, homotetramer. Forms an RuvA(8)-RuvB(12)-Holliday junction (HJ) complex. HJ DNA is sandwiched between 2 RuvA tetramers; dsDNA enters through RuvA and exits via RuvB. An RuvB hexamer assembles on each DNA strand where it exits the tetramer. Each RuvB hexamer is contacted by two RuvA subunits (via domain III) on 2 adjacent RuvB subunits; this complex drives branch migration. In the full resolvosome a probable DNA-RuvA(4)-RuvB(12)-RuvC(2) complex forms which resolves the HJ.

The protein localises to the cytoplasm. The RuvA-RuvB-RuvC complex processes Holliday junction (HJ) DNA during genetic recombination and DNA repair, while the RuvA-RuvB complex plays an important role in the rescue of blocked DNA replication forks via replication fork reversal (RFR). RuvA specifically binds to HJ cruciform DNA, conferring on it an open structure. The RuvB hexamer acts as an ATP-dependent pump, pulling dsDNA into and through the RuvAB complex. HJ branch migration allows RuvC to scan DNA until it finds its consensus sequence, where it cleaves and resolves the cruciform DNA. In Natranaerobius thermophilus (strain ATCC BAA-1301 / DSM 18059 / JW/NM-WN-LF), this protein is Holliday junction branch migration complex subunit RuvA.